Here is a 369-residue protein sequence, read N- to C-terminus: Alanine racemase (369 aa).

The active-site Proton acceptor; specific for D-alanine is the lysine 35. Lysine 35 is modified (N6-(pyridoxal phosphate)lysine). Residue arginine 130 coordinates substrate. Residue tyrosine 257 is the Proton acceptor; specific for L-alanine of the active site. Methionine 305 serves as a coordination point for substrate.

This sequence belongs to the alanine racemase family. The cofactor is pyridoxal 5'-phosphate.

It carries out the reaction L-alanine = D-alanine. It participates in amino-acid biosynthesis; D-alanine biosynthesis; D-alanine from L-alanine: step 1/1. Its function is as follows. Catalyzes the interconversion of L-alanine and D-alanine. May also act on other amino acids. This is Alanine racemase (alr) from Paracidovorax citrulli (strain AAC00-1) (Acidovorax citrulli).